The following is a 78-amino-acid chain: Surfactant-associated protein 2 (78 aa).

The signal sequence occupies residues 1 to 19 (MGAGLPLVLLLTLVGSSQG). Residue N37 is glycosylated (N-linked (GlcNAc...) asparagine).

In terms of processing, N-glycosylated.

The protein localises to the secreted. The protein resides in the cytoplasmic vesicle. It localises to the secretory vesicle. It is found in the golgi apparatus. Its function is as follows. Putative surfactant protein. This chain is Surfactant-associated protein 2 (SFTA2), found in Bos taurus (Bovine).